The sequence spans 161 residues: Succinate dehydrogenase assembly factor 2, mitochondrial (161 aa).

The N-terminal 31 residues, 1–31 (MSLLRVTRSSGHLSAVCRLPARSISTTSILL), are a transit peptide targeting the mitochondrion.

Belongs to the SDHAF2 family. As to quaternary structure, interacts with the flavoprotein subunit within the SDH catalytic dimer.

The protein localises to the mitochondrion matrix. Plays an essential role in the assembly of succinate dehydrogenase (SDH), an enzyme complex (also referred to as respiratory complex II) that is a component of both the tricarboxylic acid (TCA) cycle and the mitochondrial electron transport chain, and which couples the oxidation of succinate to fumarate with the reduction of ubiquinone (coenzyme Q) to ubiquinol. Required for flavinylation (covalent attachment of FAD) of the flavoprotein subunit of the SDH catalytic dimer. In Aedes aegypti (Yellowfever mosquito), this protein is Succinate dehydrogenase assembly factor 2, mitochondrial.